Here is a 236-residue protein sequence, read N- to C-terminus: Orotidine 5'-phosphate decarboxylase (236 aa).

Substrate contacts are provided by residues aspartate 17, lysine 39, 66–75 (DLKFHDIPNT), threonine 125, arginine 186, glutamine 195, glycine 215, and arginine 216. The active-site Proton donor is lysine 68.

This sequence belongs to the OMP decarboxylase family. Type 1 subfamily. Homodimer.

The catalysed reaction is orotidine 5'-phosphate + H(+) = UMP + CO2. It functions in the pathway pyrimidine metabolism; UMP biosynthesis via de novo pathway; UMP from orotate: step 2/2. In terms of biological role, catalyzes the decarboxylation of orotidine 5'-monophosphate (OMP) to uridine 5'-monophosphate (UMP). This Buchnera aphidicola subsp. Acyrthosiphon pisum (strain APS) (Acyrthosiphon pisum symbiotic bacterium) protein is Orotidine 5'-phosphate decarboxylase.